We begin with the raw amino-acid sequence, 546 residues long: SusD-like protein BACOVA_02651 (546 aa).

A signal peptide spans 1-21 (MRIFMKSKLLVIATTALLFAA). The N-palmitoyl cysteine moiety is linked to residue cysteine 22. A lipid anchor (S-diacylglycerol cysteine) is attached at cysteine 22.

This sequence belongs to the SusD family.

It localises to the cell outer membrane. The protein operates within glucan metabolism; xyloglucan degradation. Its function is as follows. Polysaccharide-binding protein present at the surface of the cell. Probably mediates xyloglucan-binding before xyloglucan transport in the periplasm for degradation. The protein is SusD-like protein BACOVA_02651 of Bacteroides ovatus (strain ATCC 8483 / DSM 1896 / JCM 5824 / BCRC 10623 / CCUG 4943 / NCTC 11153).